A 148-amino-acid chain; its full sequence is 3-hydroxyacyl-[acyl-carrier-protein] dehydratase FabZ (148 aa).

Residue His-48 is part of the active site.

It belongs to the thioester dehydratase family. FabZ subfamily.

Its subcellular location is the cytoplasm. The catalysed reaction is a (3R)-hydroxyacyl-[ACP] = a (2E)-enoyl-[ACP] + H2O. Involved in unsaturated fatty acids biosynthesis. Catalyzes the dehydration of short chain beta-hydroxyacyl-ACPs and long chain saturated and unsaturated beta-hydroxyacyl-ACPs. In Campylobacter fetus subsp. fetus (strain 82-40), this protein is 3-hydroxyacyl-[acyl-carrier-protein] dehydratase FabZ.